The following is a 63-amino-acid chain: Cecropin-B (63 aa).

The first 22 residues, 1–22 (MNFAKILSFVFALVLALSMTSA), serve as a signal peptide directing secretion. A propeptide spans 23-26 (APEP) (removed by a dipeptidylpeptidase). At lysine 47 the chain carries 5-hydroxylysine; partial. Isoleucine 61 carries the isoleucine amide modification.

This sequence belongs to the cecropin family. In terms of processing, lepidopteran-B differs from lepidopteran-A by its hydroxylated residue. Highest expression in fat body and hemocytes. Is also expressed in Malpighian tubules and to a much lesser extent in midgut. Not present in silk gland.

Its subcellular location is the secreted. Functionally, cecropins have lytic and antibacterial activity against several Gram-positive and Gram-negative bacteria. In Bombyx mori (Silk moth), this protein is Cecropin-B (CECB1).